The following is a 215-amino-acid chain: Large ribosomal subunit protein mL43 (215 aa).

It belongs to the mitochondrion-specific ribosomal protein mL43 family. As to quaternary structure, component of the mitochondrial large ribosomal subunit (mt-LSU). Mature mammalian 55S mitochondrial ribosomes consist of a small (28S) and a large (39S) subunit. The 28S small subunit contains a 12S ribosomal RNA (12S mt-rRNA) and 30 different proteins. The 39S large subunit contains a 16S rRNA (16S mt-rRNA), a copy of mitochondrial valine transfer RNA (mt-tRNA(Val)), which plays an integral structural role, and 52 different proteins. High relative levels in skeletal muscle and testis. Lower levels of expression in the heart, brain, placenta, lung, liver, kidney, pancreas, spleen, thymus, prostate, ovary, small intestine, colon and leukocytes. Expression is coregulated with TWNK.

The protein localises to the mitochondrion. The sequence is that of Large ribosomal subunit protein mL43 (MRPL43) from Homo sapiens (Human).